A 201-amino-acid polypeptide reads, in one-letter code: Probable cobalt-precorrin-6B C(15)-methyltransferase (decarboxylating) (201 aa).

S-adenosyl-L-methionine is bound by residues threonine 28, glycine 52–glycine 56, aspartate 76, and alanine 105.

Belongs to the methyltransferase superfamily. Archaeal-type CbiT family.

It catalyses the reaction Co-precorrin-6B + S-adenosyl-L-methionine = Co-precorrin-7 + S-adenosyl-L-homocysteine + CO2. It functions in the pathway cofactor biosynthesis; adenosylcobalamin biosynthesis; cob(II)yrinate a,c-diamide from sirohydrochlorin (anaerobic route): step 8/10. Catalyzes the methylation of C-15 in cobalt-precorrin-6B followed by the decarboxylation of C-12 to form cobalt-precorrin-7. This Thermoplasma volcanium (strain ATCC 51530 / DSM 4299 / JCM 9571 / NBRC 15438 / GSS1) protein is Probable cobalt-precorrin-6B C(15)-methyltransferase (decarboxylating).